We begin with the raw amino-acid sequence, 198 residues long: KHSLPDLPYDYGALEPHINAQIMQLHHSKHHAAYVNNLNVTEEKYQEALAKGDVTAQIALQPALKFNGGGHINHSIFWTNLSPNGGGEPKGELLEAIKRDFGSFEKFKEKLTAASVGVQGSGWGWLGFNKERGQLQIAACPNQDPLQGTTGLIPLLGIDVWEHAYYLQYKNVRPDYLKAIWNVINWENVTERYMACKK.

H26 provides a ligand contact to Mn(2+). The residue at position 34 (Y34) is a 3'-nitrotyrosine. K44 and K51 each carry N6-acetyllysine; alternate. K44 and K51 each carry N6-succinyllysine; alternate. A Mn(2+)-binding site is contributed by H74. K90 is subject to N6-acetyllysine. N6-acetyllysine; alternate is present on residues K98 and K106. An N6-succinyllysine; alternate mark is found at K98 and K106. Mn(2+) is bound by residues D159 and H163. K178 carries the N6-acetyllysine modification.

The protein belongs to the iron/manganese superoxide dismutase family. Homotetramer. The cofactor is Mn(2+). In terms of processing, nitrated under oxidative stress. Nitration coupled with oxidation inhibits the catalytic activity. Post-translationally, acetylation at Lys-98 decreases enzymatic activity. Deacetylated by SIRT3 upon exposure to ionizing radiations or after long fasting. Polyubiquitinated; leading to proteasomal degradation. Deubiquitinated by USP36 which increases protein stability.

Its subcellular location is the mitochondrion matrix. It carries out the reaction 2 superoxide + 2 H(+) = H2O2 + O2. Functionally, destroys superoxide anion radicals which are normally produced within the cells and which are toxic to biological systems. This Macaca fuscata fuscata (Japanese macaque) protein is Superoxide dismutase [Mn], mitochondrial (SOD2).